Here is an 81-residue protein sequence, read N- to C-terminus: MSANCMFNLDNDYIYWKPITYPKALVFISHGAGKHSGRYDELAENISSLGILVFSHDHIGHGRSNGEKMMIDDFGTARGNY.

It belongs to the poxviridae K6 protein family.

The chain is Protein K6 from Homo sapiens (Human).